The primary structure comprises 85 residues: Delta/kappa-theraphotoxin-Pm1a (85 aa).

A signal peptide spans 1-19 (MKTFVFIVLVALAFVLTAA). The propeptide occupies 20–43 (KEERANPSELVSALAELVMLDAER). Intrachain disulfides connect C50-C64, C57-C69, and C63-C77.

It belongs to the neurotoxin 10 (Hwtx-1) family. As to expression, expressed by the venom gland.

Its subcellular location is the secreted. In terms of biological role, multimodal toxin that enhances nociceptor excitability mainly by the simultaneous stimulation of repetitive firing (through Nav1.8/SCN10A channel current enhancement) and impairment of repolarization (by inhibiting delayed rectifier current of Kv2.1/KCNB1), with a potential contribution from tetrodotoxin-sensitive voltage-gated sodium channels (Nav) modified excitability. Enhances Nav1.8/SCN10A currents (EC(50)=1.1 uM), modifies the channel gating by a right-shift in steady-state inactivation and delays open-state inactivation. Also decreases Kv2.1/KCNB1 currents (IC(50)=0.43 uM) and causes a depolarizing shift in the voltage dependence of activation without change in steady-state inactivation. In addition, inhibits peak currents of human sodium channels (Nav1.1 to Nav1.7, IC(50)=0.38-2.3 uM) and delays fast inactivation of Nav1.1/SCN1A, Nav1.3/SCN3A, Nav1.6/SCN8A, and Nav1.7/SCN9A. In small dorsal root ganglion neurons, induces hyperexcitability by enhancing tetrodotoxin-resistant sodium currents, impairing repolarization and lowering the threshold of action potential firing, consistent with the severe pain associated with envenomation. In vivo, elicits nocifensive behavior in mice after intraplantar injection. This chain is Delta/kappa-theraphotoxin-Pm1a, found in Pelinobius muticus (King baboon spider).